The following is a 295-amino-acid chain: Pantothenate synthetase (295 aa).

Histidine 37 (proton donor) is an active-site residue. Residue glutamine 61 participates in (R)-pantoate binding. Glutamine 61 lines the beta-alanine pocket. 154–157 serves as a coordination point for ATP; sequence GRKD. A (R)-pantoate-binding site is contributed by glutamine 160. Residues valine 183 and 191-194 each bind ATP; that span reads QSSR.

It belongs to the pantothenate synthetase family. Homodimer.

Its subcellular location is the cytoplasm. The enzyme catalyses (R)-pantoate + beta-alanine + ATP = (R)-pantothenate + AMP + diphosphate + H(+). It functions in the pathway cofactor biosynthesis; (R)-pantothenate biosynthesis; (R)-pantothenate from (R)-pantoate and beta-alanine: step 1/1. Functionally, catalyzes the condensation of pantoate with beta-alanine in an ATP-dependent reaction via a pantoyl-adenylate intermediate. This chain is Pantothenate synthetase, found in Salinibacter ruber (strain DSM 13855 / M31).